We begin with the raw amino-acid sequence, 499 residues long: MLTTMQRVHNKPIDSIGGFKHLVKQSNGGDGGVTATDMQEPSIETDKLSYEIFSILESKFLFGYDDDLKLMESRSRDPSPEQETASPAMVEALNGVVPGTVKNQRGKVCVLSIDSGGMRGIIPGKALAYLEHALKSKSGDPNARIADYFDVASGSGIGGIFTAMLFASSDGNRPIFKAEDTWRFLAMKGKSFYNKSPPGILNRVMKTGSGGSGGSGSKLEKAMKESFEELTLKDTLKPVLIPCYDLTSSAPFLFSRADALETDGYDFKLWEVCRATWAEPGVFEPVEMRSVDGKTRCVAVDGGLAMSNPTAAAITHVLHNKQEFPFVRGVEDLLVLSLGTGQLVDVKYDCDKVMKWKAKHWARPAVRISADGAADTVDQAVSMAFGQCRRSNYVRIQANGSSFGPCKPNIDTDASPSNVNMLVGVAEEMLKQKNAESVLFGGKKINEESNYEKLDWLAGELVLEHQRRSCRIAPTVAFKQSGDRRVDQQTIFKDIDCMF.

In terms of domain architecture, PNPLA spans 111 to 314 (LSIDSGGMRG…AMSNPTAAAI (204 aa)). Positions 116-119 (GGMR) match the GGXR motif. The active-site Nucleophile is serine 155. Residue aspartate 301 is the Proton acceptor of the active site. Residues 301-303 (DGG) carry the DGA/G motif.

It belongs to the patatin family. As to expression, highly expressed in siliques and at lower levels in roots and flowers.

Its function is as follows. Possesses non-specific lipolytic acyl hydrolase (LAH) activity. Hydrolyzes phospholipids as well as galactolipids. May play a role in disease resistance. The sequence is that of Patatin-like protein 6 (PLP6) from Arabidopsis thaliana (Mouse-ear cress).